We begin with the raw amino-acid sequence, 172 residues long: 5'(3')-deoxyribonucleotidase (172 aa).

Catalysis depends on aspartate 8, which acts as the Nucleophile. The Mg(2+) site is built by aspartate 8, aspartate 10, and aspartate 132. Aspartate 10 serves as the catalytic Proton donor.

The protein belongs to the 5'(3')-deoxyribonucleotidase family. Requires Mg(2+) as cofactor.

In terms of biological role, dephosphorylates nucleoside monophosphates such as the 5' and 2'(3')-phosphates of deoxyribonucleotides in vitro. Also catalyzes the dephosphorylation of coenzyme A (CoA), pyridoxal-5'-phosphate (PLP), riboflavine-5-phosphate (FMN) and nicotinamide adenine dinucleotide phosphate (NADP) in vitro. The sequence is that of 5'(3')-deoxyribonucleotidase (yorS) from Bacillus subtilis (strain 168).